Reading from the N-terminus, the 135-residue chain is Prostate and breast cancer overexpressed gene 1 protein (135 aa).

As to expression, expressed in colon, prostate, small intestine, testis and spleen, with lower expression in thymus, ovary, and peripheral blood leukocytes. Up-regulated expression in prostate, breast, and bladder cancer, but not in lung and colon cancer.

It localises to the cytoplasm. It is found in the nucleus. In Homo sapiens (Human), this protein is Prostate and breast cancer overexpressed gene 1 protein (PBOV1).